We begin with the raw amino-acid sequence, 453 residues long: Putative folate transporter 2 (453 aa).

Helical transmembrane passes span 41 to 64 (IVVY…YYLF), 76 to 96 (SLIL…ALIT), 108 to 126 (PYLF…SLAL), 132 to 156 (IQAT…EALV), 176 to 195 (IASK…YFLE), 201 to 220 (YIFM…CLFL), 241 to 260 (FINT…YMSG), 280 to 300 (SFMG…IIVY), 312 to 330 (TLIF…PIIL), 346 to 366 (VLSG…PLFI), and 416 to 437 (LSMY…VPLL).

Belongs to the major facilitator superfamily. Folate-biopterin transporter (TC 2.A.71) family.

It localises to the plastid. The protein localises to the apicoplast. The protein resides in the membrane. In terms of biological role, putative folate transporter. Required for sporogony of malaria parasites and host switching. The polypeptide is Putative folate transporter 2 (Plasmodium berghei (strain Anka)).